Consider the following 318-residue polypeptide: Transaldolase (318 aa).

The active-site Schiff-base intermediate with substrate is the K132.

Belongs to the transaldolase family. Type 1 subfamily. In terms of assembly, homodimer.

The protein resides in the cytoplasm. It catalyses the reaction D-sedoheptulose 7-phosphate + D-glyceraldehyde 3-phosphate = D-erythrose 4-phosphate + beta-D-fructose 6-phosphate. It participates in carbohydrate degradation; pentose phosphate pathway; D-glyceraldehyde 3-phosphate and beta-D-fructose 6-phosphate from D-ribose 5-phosphate and D-xylulose 5-phosphate (non-oxidative stage): step 2/3. Functionally, transaldolase is important for the balance of metabolites in the pentose-phosphate pathway. The protein is Transaldolase of Shewanella oneidensis (strain ATCC 700550 / JCM 31522 / CIP 106686 / LMG 19005 / NCIMB 14063 / MR-1).